The chain runs to 548 residues: T-complex protein 1 subunit theta (548 aa).

The interval 527–548 is disordered; the sequence is QATGGPKPRGPKAQDEDDDGMA.

It belongs to the TCP-1 chaperonin family. As to quaternary structure, heterooligomeric complex.

The protein localises to the cytoplasm. Its function is as follows. Molecular chaperone; assists the folding of proteins upon ATP hydrolysis. Known to play a role, in vitro, in the folding of actin and tubulin. Required for correct subcellular localization of pgl-1. This Caenorhabditis elegans protein is T-complex protein 1 subunit theta (cct-8).